We begin with the raw amino-acid sequence, 176 residues long: Beta-carotene hydroxylase (176 aa).

The 117-residue stretch at 10-126 folds into the Fatty acid hydroxylase domain; the sequence is LSVIAMEGIA…AHRLHHAVRG (117 aa). The segment at 152-176 is disordered; sequence HGRPPKRDAAKDRPDAASPSSSSPE. Residues 156 to 166 show a composition bias toward basic and acidic residues; the sequence is PKRDAAKDRPD. Residues 167-176 show a composition bias toward low complexity; that stretch reads AASPSSSSPE.

The protein belongs to the sterol desaturase family.

It functions in the pathway carotenoid biosynthesis; zeaxanthin biosynthesis. Functionally, catalyzes the hydroxylation reaction from beta-carotene to zeaxanthin. The protein is Beta-carotene hydroxylase (crtZ) of Pseudescherichia vulneris (Escherichia vulneris).